Reading from the N-terminus, the 253-residue chain is MSIEIHASAKNLNLWYDSNQVLHNISLDIYKREVTAFIGPSGCGKSTFLRCFNRMNDFVSNCKIKGELIIENIDVCSVNTNVVLLRAKVGMVFQKPNPFPKSIYDNVAYGPKLHGLAKNKKKLDEIVEKSLTSVGLWEELSDRLKDNAFELSGGQQQRLCIARAIAVKPTMLLMDEPCSALDPFATSVIENLIQNLKKNFTIIVVTHSMKQARKVSDKVAFFESGKLIEYNTTDEIFKNPQSSKTKRYIVDHL.

Residues Ala7 to Ile249 enclose the ABC transporter domain. Gly39–Ser46 serves as a coordination point for ATP.

It belongs to the ABC transporter superfamily. Phosphate importer (TC 3.A.1.7) family. As to quaternary structure, the complex is composed of two ATP-binding proteins (PstB), two transmembrane proteins (PstC and PstA) and a solute-binding protein (PstS).

The protein resides in the cell inner membrane. It catalyses the reaction phosphate(out) + ATP + H2O = ADP + 2 phosphate(in) + H(+). Its function is as follows. Part of the ABC transporter complex PstSACB involved in phosphate import. Responsible for energy coupling to the transport system. This is Phosphate import ATP-binding protein PstB from Ehrlichia ruminantium (strain Gardel).